The primary structure comprises 94 residues: Co-chaperonin GroES (94 aa).

It belongs to the GroES chaperonin family. In terms of assembly, heptamer of 7 subunits arranged in a ring. Interacts with the chaperonin GroEL.

It localises to the cytoplasm. Together with the chaperonin GroEL, plays an essential role in assisting protein folding. The GroEL-GroES system forms a nano-cage that allows encapsulation of the non-native substrate proteins and provides a physical environment optimized to promote and accelerate protein folding. GroES binds to the apical surface of the GroEL ring, thereby capping the opening of the GroEL channel. This chain is Co-chaperonin GroES, found in Staphylococcus carnosus (strain TM300).